Consider the following 83-residue polypeptide: Cytochrome b559 subunit alpha (83 aa).

A helical membrane pass occupies residues 21-35 (VIHSITVPSLFIAGW). Position 23 (H23) interacts with heme.

The protein belongs to the PsbE/PsbF family. As to quaternary structure, heterodimer of an alpha subunit and a beta subunit. PSII is composed of 1 copy each of membrane proteins PsbA, PsbB, PsbC, PsbD, PsbE, PsbF, PsbH, PsbI, PsbJ, PsbK, PsbL, PsbM, PsbT, PsbX, PsbY, PsbZ, Psb30/Ycf12, at least 3 peripheral proteins of the oxygen-evolving complex and a large number of cofactors. It forms dimeric complexes. It depends on heme b as a cofactor.

Its subcellular location is the plastid. It localises to the chloroplast thylakoid membrane. In terms of biological role, this b-type cytochrome is tightly associated with the reaction center of photosystem II (PSII). PSII is a light-driven water:plastoquinone oxidoreductase that uses light energy to abstract electrons from H(2)O, generating O(2) and a proton gradient subsequently used for ATP formation. It consists of a core antenna complex that captures photons, and an electron transfer chain that converts photonic excitation into a charge separation. This Oltmannsiellopsis viridis (Marine flagellate) protein is Cytochrome b559 subunit alpha.